A 450-amino-acid chain; its full sequence is MREIISIHIGQAGIQVGNACWELYCLEHGIEPDGTMPSDTTVGVAHDAFNTFFSETGAGKHVPRAIFVDLEPTVIDEVRTGSYRQLFHPEQLISGKEDAANNFARGHYTVGKEIVDLCLDRVRKLADNCTGLQGFLVFNAVGGGTGSGLGSLLLERLSVDYGKKSKLGFTIYPSPQVSTAVVEPYNSVLSTHSLLEHTDVAVLLDNEAIYDICRRSLDIERPTYTNLNRLISQIISSLTTSLRFDGAINVDVTEFQTNLVPYPRIHFMLSSYAPVISAEKAYHEQLSVPEITNAVFEPSSMMAKCDPRHGKYMACCLMYRGDVVPKDVNAAVATIKTKRTVQFVDWCPTGFKCGINYQPPSVVPGGDLAKVQRAVCMISNNTAVAEVFSRIDHKFDLMYAKRAFVHWYVGEGMEEGEFSEAREDLAALEKDYEEVGAEGADDENDDGEDY.

Positions 11, 71, 144, 145, 179, 206, and 228 each coordinate GTP. Glu-71 lines the Mg(2+) pocket. Residue Glu-254 is part of the active site.

This sequence belongs to the tubulin family. In terms of assembly, dimer of alpha and beta chains. A typical microtubule is a hollow water-filled tube with an outer diameter of 25 nm and an inner diameter of 15 nM. Alpha-beta heterodimers associate head-to-tail to form protofilaments running lengthwise along the microtubule wall with the beta-tubulin subunit facing the microtubule plus end conferring a structural polarity. Microtubules usually have 13 protofilaments but different protofilament numbers can be found in some organisms and specialized cells. The cofactor is Mg(2+). Undergoes a tyrosination/detyrosination cycle, the cyclic removal and re-addition of a C-terminal tyrosine residue by the enzymes tubulin tyrosine carboxypeptidase (TTCP) and tubulin tyrosine ligase (TTL), respectively.

Its subcellular location is the cytoplasm. The protein resides in the cytoskeleton. It carries out the reaction GTP + H2O = GDP + phosphate + H(+). In terms of biological role, tubulin is the major constituent of microtubules, a cylinder consisting of laterally associated linear protofilaments composed of alpha- and beta-tubulin heterodimers. Microtubules grow by the addition of GTP-tubulin dimers to the microtubule end, where a stabilizing cap forms. Below the cap, tubulin dimers are in GDP-bound state, owing to GTPase activity of alpha-tubulin. This Oryza sativa subsp. japonica (Rice) protein is Tubulin alpha-1 chain (TUBA1).